The primary structure comprises 872 residues: Homeobox-leucine zipper protein ROC6 (872 aa).

2 disordered regions span residues valine 28 to leucine 53 and asparagine 67 to threonine 130. Positions glycine 74–aspartate 85 are enriched in gly residues. A compositionally biased stretch (basic and acidic residues) spans serine 86–serine 99. Over residues proline 119 to threonine 130 the composition is skewed to basic residues. The segment at residues lysine 122–glutamine 181 is a DNA-binding region (homeobox). Residues glutamine 176–alanine 248 adopt a coiled-coil conformation. Residues glycine 340–isoleucine 583 enclose the START domain. The segment at histidine 792–glycine 818 is disordered.

The protein belongs to the HD-ZIP homeobox family. Class IV subfamily.

The protein resides in the nucleus. Its function is as follows. Probable transcription factor. The sequence is that of Homeobox-leucine zipper protein ROC6 (ROC6) from Oryza sativa subsp. japonica (Rice).